The chain runs to 320 residues: dTDP-glucose 4,6-dehydratase (320 aa).

NAD(+) contacts are provided by residues 11-12 (FI), 38-41 (DKLG), 64-65 (DI), 84-88 (FAAET), and Ser103. Residue Thr88 participates in substrate binding. Thr128 provides a ligand contact to substrate. Asp129 acts as the Proton donor in catalysis. Catalysis depends on proton acceptor residues Glu130 and Tyr152. Position 152–156 (152–156 (YAASK)) interacts with NAD(+). Asn181 lines the substrate pocket. Asn182 contributes to the NAD(+) binding site. Residues 191-192 (KM), 207-209 (PVY), Arg216, Asn251, and 274-278 (DRKGH) each bind substrate.

It belongs to the NAD(P)-dependent epimerase/dehydratase family. dTDP-glucose dehydratase subfamily. In terms of assembly, homodimer. It depends on NAD(+) as a cofactor.

It catalyses the reaction dTDP-alpha-D-glucose = dTDP-4-dehydro-6-deoxy-alpha-D-glucose + H2O. Functionally, probably involved in the biosynthesis of the acarviose moiety of the alpha-glucosidase inhibitor acarbose. Catalyzes the dehydration of dTDP-D-glucose to form dTDP-6-deoxy-D-xylo-4-hexulose via a three-step process involving oxidation, dehydration and reduction. The chain is dTDP-glucose 4,6-dehydratase from Actinoplanes sp. (strain ATCC 31044 / CBS 674.73 / SE50/110).